The primary structure comprises 539 residues: Putative serine/threonine-protein kinase L670 (539 aa).

Residues 1 to 115 (MSLFNNHPEL…ILKVFKFGLH (115 aa)) form the Cyclin N-terminal domain. One can recognise a Protein kinase domain in the interval 258–519 (MNVIEKLGIG…VLKIFSECFV (262 aa)). ATP contacts are provided by residues 264–272 (LGIGSFGLV) and Lys285. The active-site Proton acceptor is the Asp375.

Belongs to the protein kinase superfamily. Ser/Thr protein kinase family.

The enzyme catalyses L-seryl-[protein] + ATP = O-phospho-L-seryl-[protein] + ADP + H(+). It carries out the reaction L-threonyl-[protein] + ATP = O-phospho-L-threonyl-[protein] + ADP + H(+). The chain is Putative serine/threonine-protein kinase L670 from Acanthamoeba polyphaga mimivirus (APMV).